A 275-amino-acid polypeptide reads, in one-letter code: Alpha carbonic anhydrase 7 (275 aa).

An N-terminal signal peptide occupies residues 1–27; it reads MVNYSSISCIFFVALFSIFTIVSISSA. N-linked (GlcNAc...) asparagine glycosylation is found at Asn3 and Asn96. The Alpha-carbonic anhydrase domain occupies 38 to 272; that stretch reads REFNYKKNDE…TNKRIVHLYR (235 aa). Cysteines 63 and 222 form a disulfide. The active-site Proton acceptor is His104. Zn(2+) contacts are provided by His130, His132, and His149. 218 to 219 is a substrate binding site; it reads TT. Residue Asn225 is glycosylated (N-linked (GlcNAc...) asparagine).

This sequence belongs to the alpha-class carbonic anhydrase family. Requires Zn(2+) as cofactor. Post-translationally, N-glycosylated.

It is found in the plastid. It localises to the chloroplast stroma. It carries out the reaction hydrogencarbonate + H(+) = CO2 + H2O. Its function is as follows. Reversible hydration of carbon dioxide. This is Alpha carbonic anhydrase 7 (ACA7) from Arabidopsis thaliana (Mouse-ear cress).